We begin with the raw amino-acid sequence, 1465 residues long: Claspin (1465 aa).

Residues 1–12 (MSESLAETAAAA) show a composition bias toward low complexity. Disordered regions lie at residues 1–490 (MSES…KAKV), 544–566 (ATAL…GLRM), and 585–636 (ATEF…TEDM). Residues S45, S49, S52, S64, S75, S109, and S114 each carry the phosphoserine modification. A compositionally biased stretch (basic and acidic residues) spans 121 to 133 (QAEKKTQKEEGKQ). The segment covering 154–163 (KSNKTKKAVK) has biased composition (basic residues). Residues 205-216 (EYDHHQQHEKPA) are compositionally biased toward basic and acidic residues. Residues 217 to 228 (KTQKSKKLAKKQ) are compositionally biased toward basic residues. 4 stretches are compositionally biased toward basic and acidic residues: residues 229-246 (KQQE…EKKK), 254-263 (KKSDKSKIDS), 273-286 (EDLK…EPQK), and 296-335 (TNKD…EQIV). Residues 260 to 281 (KIDSLMDNEEDAGEDLKMYQED) adopt a coiled-coil conformation. Basic residues predominate over residues 336-346 (KPKKMAKKNKQ). Residues S350 and S354 each carry the phosphoserine modification. Residues 358–373 (QNEKVDQDHDLKKMSS) are compositionally biased toward basic and acidic residues. Acidic residues predominate over residues 375-388 (NELEMGSDKEDQEM). S381, S404, S406, S432, S434, S444, S456, S458, and S468 each carry phosphoserine. Residues 400-417 (QRMDSESEDEIPKTESEK) are compositionally biased toward basic and acidic residues. A compositionally biased stretch (acidic residues) spans 432–441 (SESEPEETAE). Over residues 456–470 (SESEPELDNPEESAG) the composition is skewed to acidic residues. Residues 564 to 587 (LRMTREELEAYAKLMEDRAKEATE) are a coiled coil. The segment covering 594–606 (ESDEEDDSENEEP) has biased composition (acidic residues). A Phosphothreonine modification is found at T693. A coiled-coil region spans residues 839-874 (LITKKRMEDLRKKQAEEQEKMAEDEEEGMDVDEEYE). The segment covering 845–859 (MEDLRKKQAEEQEKM) has biased composition (basic and acidic residues). A disordered region spans residues 845 to 977 (MEDLRKKQAE…LDLLQTPKPS (133 aa)). Acidic residues-rich tracts occupy residues 860–875 (AEDE…EYEP), 913–942 (ADED…EANP), and 960–969 (DDNSDEDDLD). The residue at position 963 (S963) is a Phosphoserine. T973 bears the Phosphothreonine mark. S990 carries the post-translational modification Phosphoserine. The disordered stretch occupies residues 1058–1154 (CSGTFATQLP…AEPVEEIPET (97 aa)). Over residues 1067 to 1076 (PSQAPTQQPE) the composition is skewed to low complexity. A phosphoserine mark is found at S1093 and S1094. Positions 1094 to 1103 (SDEEAQEDAL) are enriched in acidic residues. Positions 1109–1123 (RNKKLTKKRPKKKAK) are enriched in basic residues. Residues 1127–1154 (SDDEDSDDEVEEFDEESDAEPVEEIPET) are compositionally biased toward acidic residues. S1287 is subject to Phosphoserine.

Belongs to the claspin family. Phosphorylated in response to DNA damage by IR and HU treatment. Phosphorylation does not require mei-41 or tefu. As to expression, detected in the ovary but not in the testis (at protein level).

It is found in the nucleus. Its function is as follows. Required for checkpoint signaling in response to DNA replication stress; either resulting from normal embryogenesis or induced by the DNA synthesis inhibitor hydroxyurea (HU). It is not required for the G2 arrest resulting from DNA double strand breaks induced by ionizing irradiation (IR). Necessary for the timely phosphorylation of Cdk1 at the mid-blastula transition. May have a minor role in maintaining genomic stability in mitotic cells. In Drosophila melanogaster (Fruit fly), this protein is Claspin.